Consider the following 211-residue polypeptide: Redox-sensing transcriptional repressor Rex (211 aa).

The H-T-H motif DNA-binding region spans 17–56 (KYHRYLEELMKNEVDRISSKELGEKIGFTASQIRQDLNCF). 91–96 (GAGNIG) contacts NAD(+).

The protein belongs to the transcriptional regulatory Rex family. As to quaternary structure, homodimer.

It is found in the cytoplasm. Modulates transcription in response to changes in cellular NADH/NAD(+) redox state. This chain is Redox-sensing transcriptional repressor Rex, found in Clostridium beijerinckii (strain ATCC 51743 / NCIMB 8052) (Clostridium acetobutylicum).